The chain runs to 400 residues: Tryptophan synthase beta chain (400 aa).

Lys91 bears the N6-(pyridoxal phosphate)lysine mark.

It belongs to the TrpB family. In terms of assembly, tetramer of two alpha and two beta chains. Pyridoxal 5'-phosphate serves as cofactor.

The enzyme catalyses (1S,2R)-1-C-(indol-3-yl)glycerol 3-phosphate + L-serine = D-glyceraldehyde 3-phosphate + L-tryptophan + H2O. Its pathway is amino-acid biosynthesis; L-tryptophan biosynthesis; L-tryptophan from chorismate: step 5/5. Functionally, the beta subunit is responsible for the synthesis of L-tryptophan from indole and L-serine. In Listeria monocytogenes serotype 4a (strain HCC23), this protein is Tryptophan synthase beta chain.